The primary structure comprises 216 residues: Uracil-DNA glycosylase (216 aa).

Asp59 functions as the Proton acceptor in the catalytic mechanism.

The protein belongs to the uracil-DNA glycosylase (UDG) superfamily. UNG family.

It localises to the cytoplasm. It carries out the reaction Hydrolyzes single-stranded DNA or mismatched double-stranded DNA and polynucleotides, releasing free uracil.. In terms of biological role, excises uracil residues from the DNA which can arise as a result of misincorporation of dUMP residues by DNA polymerase or due to deamination of cytosine. This is Uracil-DNA glycosylase from Staphylococcus epidermidis (strain ATCC 35984 / DSM 28319 / BCRC 17069 / CCUG 31568 / BM 3577 / RP62A).